We begin with the raw amino-acid sequence, 328 residues long: Ribosomal RNA small subunit methyltransferase H (328 aa).

S-adenosyl-L-methionine contacts are provided by residues 37-39, Asp57, Phe83, Asp104, and Gln111; that span reads GGH.

This sequence belongs to the methyltransferase superfamily. RsmH family.

The protein localises to the cytoplasm. It carries out the reaction cytidine(1402) in 16S rRNA + S-adenosyl-L-methionine = N(4)-methylcytidine(1402) in 16S rRNA + S-adenosyl-L-homocysteine + H(+). Its function is as follows. Specifically methylates the N4 position of cytidine in position 1402 (C1402) of 16S rRNA. In Neisseria meningitidis serogroup B (strain ATCC BAA-335 / MC58), this protein is Ribosomal RNA small subunit methyltransferase H.